The primary structure comprises 210 residues: Probable GTP-binding protein EngB (210 aa).

Residues 25–199 (TGIEVAFAGR…RQKLDTWFNE (175 aa)) form the EngB-type G domain. GTP contacts are provided by residues 33–40 (GRSNAGKS), 60–64 (GRTQL), 78–81 (DLPG), 145–148 (TKAD), and 178–180 (FSS). Mg(2+)-binding residues include serine 40 and threonine 62.

The protein belongs to the TRAFAC class TrmE-Era-EngA-EngB-Septin-like GTPase superfamily. EngB GTPase family. Requires Mg(2+) as cofactor.

Its function is as follows. Necessary for normal cell division and for the maintenance of normal septation. This chain is Probable GTP-binding protein EngB, found in Escherichia coli O157:H7.